Reading from the N-terminus, the 402-residue chain is Multidrug resistance protein MdtH (402 aa).

Residues 1–12 (MSRVSQARNLGK) lie on the Cytoplasmic side of the membrane. A helical transmembrane segment spans residues 13 to 33 (YFLLIDNMLVVLGFFVVFPLI). The Periplasmic segment spans residues 34-98 (SIRFVDQMGW…GFATMGIAHE (65 aa)). Residues 99–116 (PWLLWFSCFLSGLGGTLF) traverse the membrane as a helical segment. Topologically, residues 117–138 (DPPRSALVVKLIRPEQRGRFFS) are cytoplasmic. Residues 139–159 (LLMMQDSAGAVIGALLGSWLL) form a helical membrane-spanning segment. At 160–164 (QYDFR) the chain is on the periplasmic side. The helical transmembrane segment at 165–185 (LVCATGAILFILCALFNAWLL) threads the bilayer. Residues 186–213 (PAWKLSTVRTPVREGMRRVMSDKRFVTY) are Cytoplasmic-facing. Residues 214–234 (VLTLAGYYMLAVQVMLMLPIM) traverse the membrane as a helical segment. At 235 to 243 (VNDIAGSPA) the chain is on the periplasmic side. Residues 244-264 (AVKWMYAIEACLSLTLLYPIA) traverse the membrane as a helical segment. Residues 265-276 (RWSEKRFRLEHR) lie on the Cytoplasmic side of the membrane. A helical transmembrane segment spans residues 277–297 (LMAGLLVMSLSMIPIGMVGNL). The Periplasmic segment spans residues 298–299 (QQ). Residues 300-320 (LFTLICAFYIGSVIAEPARET) traverse the membrane as a helical segment. The Cytoplasmic segment spans residues 321–339 (LSASLADARARGSYMGFSR). The chain crosses the membrane as a helical span at residues 340-360 (LGLAIGGAIGYIGGGWLFDMG). The Periplasmic portion of the chain corresponds to 361–367 (KALAQPE). Residues 368 to 388 (LPWMMLGIIGFITFLALGWQF) traverse the membrane as a helical segment. Residues 389-402 (SHKRTPRRMLEPGA) lie on the Cytoplasmic side of the membrane.

The protein belongs to the major facilitator superfamily. DHA1 family. MdtH (TC 2.A.1.2.21) subfamily.

The protein resides in the cell inner membrane. The chain is Multidrug resistance protein MdtH from Salmonella schwarzengrund (strain CVM19633).